The following is a 131-amino-acid chain: Profilin-9 (131 aa).

A disulfide bridge connects residues Cys13 and Cys115. An Involved in PIP2 interaction motif is present at residues 81 to 97 (AVIRGKKGSGGITVKKT). The residue at position 111 (Thr111) is a Phosphothreonine.

It belongs to the profilin family. Occurs in many kinds of cells as a complex with monomeric actin in a 1:1 ratio. Post-translationally, phosphorylated by MAP kinases.

The protein resides in the cytoplasm. It localises to the cytoskeleton. Binds to actin and affects the structure of the cytoskeleton. At high concentrations, profilin prevents the polymerization of actin, whereas it enhances it at low concentrations. In Zea mays (Maize), this protein is Profilin-9.